The chain runs to 2801 residues: Neurobeachin-like protein 2 (2801 aa).

A disordered region spans residues 1379–1529 (RHEEEYEEEE…TISNTSNPQA (151 aa)). Over residues 1383–1393 (EYEEEEGETQD) the composition is skewed to acidic residues. 4 stretches are compositionally biased toward polar residues: residues 1400–1413 (DLSQ…QLKN), 1424–1437 (GDQS…SNTV), 1470–1481 (KGPQTPVGSQPE), and 1500–1528 (SSSL…SNPQ). The BEACH-type PH domain maps to 1986–2086 (SQKEKLVLSE…VRNKVYSRIL (101 aa)). Residues 2099 to 2391 (RSPQELLKAS…QLLKEPHPPR (293 aa)) enclose the BEACH domain. 7 WD repeats span residues 2431 to 2468 (LVQA…SWLP), 2492 to 2535 (RFLS…MLGK), 2538 to 2575 (LVGR…VWQV), 2588 to 2626 (RPIQ…VHSV), 2633 to 2676 (WTLR…RYAL), 2684 to 2719 (TLLA…IRDL), and 2727 to 2762 (APLA…VGAG).

This sequence belongs to the WD repeat neurobeachin family.

It localises to the endoplasmic reticulum. Involved in thrombopoiesis. Plays a role in the development or secretion of alpha-granules, that contain several growth factors important for platelet biogenesis. This is Neurobeachin-like protein 2 (nbeal2) from Danio rerio (Zebrafish).